The sequence spans 191 residues: Abscisic acid receptor PYR1 (191 aa).

The segment at Tyr23–Glu176 is START-like. Lys59 contacts abscisate. Phosphothreonine; by CARK1 is present on Thr78. The Gate loop motif lies at Ser85 to Ala89. Abscisate is bound by residues Ala89–Glu94, Arg116–Ser122, and Glu141. Residues His115 to Leu117 carry the Latch loop motif.

This sequence belongs to the PYR/PYL/RCAR abscisic acid intracellular receptor family. In terms of assembly, homodimer. Binds ABA on one subunit only. Interacts with HAB1, AHG3, ABI1 and ABI2 when complexed to ABA, and possibly with other PP2Cs. Binds to CARs protein in an ABA-independent manner, both at the plasma membrane and in the nucleus. Interacts directly with CAR1 and CAR4. Interacts with CARK1 in the cytosol. Interacts with AIP1 in an abscisic acid-dependent manner. Interacts with FREE1 (via N-terminus). Interacts with the E3 ubiquitin-protein ligase RSL1 at the plasma membrane. Ubiquitynated and degraded by the proteasome upon binding to the E3 ubiquitin-protein ligase RSL1 at the plasma membrane. Post-translationally, phosphorylated by CARK1 especially in response to abscisic acid (ABA); this phosphorylation promotes its stability and inhibitory ability to ABI1.

The protein resides in the cytoplasm. Its subcellular location is the cytosol. It localises to the nucleus. The protein localises to the cell membrane. It is found in the vacuole. Its function is as follows. Receptor for abscisic acid (ABA) required for ABA-mediated responses such as stomatal closure and germination inhibition. Inhibits the activity of group-A protein phosphatases type 2C (PP2Cs) when activated by ABA. Can be activated by both (-)-ABA and (+)-ABA. Promotes drought tolerance. This Arabidopsis thaliana (Mouse-ear cress) protein is Abscisic acid receptor PYR1.